The sequence spans 272 residues: Phosphatidylglycerol--prolipoprotein diacylglyceryl transferase (272 aa).

3 helical membrane-spanning segments follow: residues 19–39 (ISIRWYGLMYVIGFFATYFLV), 58–78 (LNTVLILCVILGGRLGYVVFY), and 94–114 (WHGGMSFHGACIALILGGLIF). Position 141 (arginine 141) interacts with a 1,2-diacyl-sn-glycero-3-phospho-(1'-sn-glycerol). The next 2 membrane-spanning stretches (helical) occupy residues 207 to 227 (GTILSLFLCLYGLFRIIIENF) and 234 to 254 (LGFIVAHITMGQLLSGAMILC).

The protein belongs to the Lgt family.

Its subcellular location is the cell inner membrane. It carries out the reaction L-cysteinyl-[prolipoprotein] + a 1,2-diacyl-sn-glycero-3-phospho-(1'-sn-glycerol) = an S-1,2-diacyl-sn-glyceryl-L-cysteinyl-[prolipoprotein] + sn-glycerol 1-phosphate + H(+). The protein operates within protein modification; lipoprotein biosynthesis (diacylglyceryl transfer). In terms of biological role, catalyzes the transfer of the diacylglyceryl group from phosphatidylglycerol to the sulfhydryl group of the N-terminal cysteine of a prolipoprotein, the first step in the formation of mature lipoproteins. The sequence is that of Phosphatidylglycerol--prolipoprotein diacylglyceryl transferase from Desulfotalea psychrophila (strain LSv54 / DSM 12343).